Here is a 264-residue protein sequence, read N- to C-terminus: Teichoic acids export ATP-binding protein TagH (264 aa).

Residues 22 to 243 (ERLKDVIVPF…YEKFLNDFKK (222 aa)) form the ABC transporter domain. 57-64 (GINGSGKS) is a binding site for ATP.

Belongs to the ABC transporter superfamily. Teichoic acids exporter (TC 3.A.1.104.1) family. As to quaternary structure, the complex is composed of two ATP-binding proteins (TagH) and two transmembrane proteins (TagG).

The protein resides in the cell membrane. It carries out the reaction ATP + H2O + teichoic acidSide 1 = ADP + phosphate + teichoic acidSide 2.. Functionally, part of the ABC transporter complex TagGH involved in teichoic acids export. Responsible for energy coupling to the transport system. In Staphylococcus saprophyticus subsp. saprophyticus (strain ATCC 15305 / DSM 20229 / NCIMB 8711 / NCTC 7292 / S-41), this protein is Teichoic acids export ATP-binding protein TagH.